We begin with the raw amino-acid sequence, 552 residues long: Glutamate--tRNA ligase (552 aa).

The 'HIGH' region signature appears at 102-112 (PNPSGPLHIGH).

Belongs to the class-I aminoacyl-tRNA synthetase family. Glutamate--tRNA ligase type 2 subfamily.

The protein resides in the cytoplasm. It catalyses the reaction tRNA(Glu) + L-glutamate + ATP = L-glutamyl-tRNA(Glu) + AMP + diphosphate. Catalyzes the attachment of glutamate to tRNA(Glu) in a two-step reaction: glutamate is first activated by ATP to form Glu-AMP and then transferred to the acceptor end of tRNA(Glu). The chain is Glutamate--tRNA ligase from Methanothermobacter marburgensis (strain ATCC BAA-927 / DSM 2133 / JCM 14651 / NBRC 100331 / OCM 82 / Marburg) (Methanobacterium thermoautotrophicum).